A 154-amino-acid polypeptide reads, in one-letter code: 6,7-dimethyl-8-ribityllumazine synthase (154 aa).

5-amino-6-(D-ribitylamino)uracil contacts are provided by residues Phe23, 57–59, and 81–83; these read AFE and AVI. Residue 86–87 participates in (2S)-2-hydroxy-3-oxobutyl phosphate binding; the sequence is AT. His89 functions as the Proton donor in the catalytic mechanism. Position 114 (Phe114) interacts with 5-amino-6-(D-ribitylamino)uracil. Arg128 is a (2S)-2-hydroxy-3-oxobutyl phosphate binding site.

The protein belongs to the DMRL synthase family.

It carries out the reaction (2S)-2-hydroxy-3-oxobutyl phosphate + 5-amino-6-(D-ribitylamino)uracil = 6,7-dimethyl-8-(1-D-ribityl)lumazine + phosphate + 2 H2O + H(+). Its pathway is cofactor biosynthesis; riboflavin biosynthesis; riboflavin from 2-hydroxy-3-oxobutyl phosphate and 5-amino-6-(D-ribitylamino)uracil: step 1/2. Catalyzes the formation of 6,7-dimethyl-8-ribityllumazine by condensation of 5-amino-6-(D-ribitylamino)uracil with 3,4-dihydroxy-2-butanone 4-phosphate. This is the penultimate step in the biosynthesis of riboflavin. This is 6,7-dimethyl-8-ribityllumazine synthase from Nautilia profundicola (strain ATCC BAA-1463 / DSM 18972 / AmH).